The sequence spans 164 residues: Ubiquitin-conjugating enzyme E2 2 (164 aa).

One can recognise a UBC core domain in the interval 4–150 (PARRRLMRDF…VKETVEKSWE (147 aa)). The active-site Glycyl thioester intermediate is Cys88.

It belongs to the ubiquitin-conjugating enzyme family.

It is found in the cytoplasm. The protein localises to the nucleus. It catalyses the reaction S-ubiquitinyl-[E1 ubiquitin-activating enzyme]-L-cysteine + [E2 ubiquitin-conjugating enzyme]-L-cysteine = [E1 ubiquitin-activating enzyme]-L-cysteine + S-ubiquitinyl-[E2 ubiquitin-conjugating enzyme]-L-cysteine.. It functions in the pathway protein modification; protein ubiquitination. Catalyzes the covalent attachment of ubiquitin to other proteins. Plays a role in transcription regulation by catalyzing the monoubiquitination of histone H2B to form H2BK123ub1. H2BK123ub1 gives a specific tag for epigenetic transcriptional activation and is also a prerequisite for H3K4me and H3K79me formation. Also involved in postreplication repair of UV-damaged DNA, in N-end rule-dependent protein degradation and in sporulation. In Kluyveromyces lactis (strain ATCC 8585 / CBS 2359 / DSM 70799 / NBRC 1267 / NRRL Y-1140 / WM37) (Yeast), this protein is Ubiquitin-conjugating enzyme E2 2 (UBC2).